Consider the following 157-residue polypeptide: Probable succinate transporter subunit YjjB (157 aa).

Transmembrane regions (helical) follow at residues 8-28 (LALAQDMILAAIPAVGFAMVF), 50-70 (MILMTSGLNIEWSTFMASMLG), 87-107 (VFTVAAVIPMFPGISAYTAMI), and 129-149 (FLTASSIVGALSIGLSIPGLW).

This sequence belongs to the ThrE exporter (TC 2.A.79) family. The transporter is composed of YjjB and YjjP.

The protein localises to the cell inner membrane. Functionally, involved in succinate export with YjjP. Both proteins are required for export. This Escherichia coli O157:H7 (strain EC4115 / EHEC) protein is Probable succinate transporter subunit YjjB.